The following is a 189-amino-acid chain: Threonylcarbamoyl-AMP synthase (189 aa).

Residues 3-189 (TTSVTEAAEC…NALTGEVIRP (187 aa)) enclose the YrdC-like domain.

Belongs to the SUA5 family. TsaC subfamily.

Its subcellular location is the cytoplasm. It carries out the reaction L-threonine + hydrogencarbonate + ATP = L-threonylcarbamoyladenylate + diphosphate + H2O. In terms of biological role, required for the formation of a threonylcarbamoyl group on adenosine at position 37 (t(6)A37) in tRNAs that read codons beginning with adenine. Catalyzes the conversion of L-threonine, HCO(3)(-)/CO(2) and ATP to give threonylcarbamoyl-AMP (TC-AMP) as the acyladenylate intermediate, with the release of diphosphate. This chain is Threonylcarbamoyl-AMP synthase, found in Acinetobacter baumannii (strain ACICU).